The following is a 380-amino-acid chain: Queuine tRNA-ribosyltransferase (380 aa).

D96 serves as the catalytic Proton acceptor. Substrate contacts are provided by residues 96–100 (DSGGF), D150, Q193, and G220. The RNA binding stretch occupies residues 251 to 257 (GVGAPDS). The active-site Nucleophile is D270. The segment at 275 to 279 (TRIAR) is RNA binding; important for wobble base 34 recognition. C308, C310, C313, and H339 together coordinate Zn(2+).

Belongs to the queuine tRNA-ribosyltransferase family. Homodimer. Within each dimer, one monomer is responsible for RNA recognition and catalysis, while the other monomer binds to the replacement base PreQ1. Zn(2+) serves as cofactor.

It catalyses the reaction 7-aminomethyl-7-carbaguanine + guanosine(34) in tRNA = 7-aminomethyl-7-carbaguanosine(34) in tRNA + guanine. Its pathway is tRNA modification; tRNA-queuosine biosynthesis. Its function is as follows. Catalyzes the base-exchange of a guanine (G) residue with the queuine precursor 7-aminomethyl-7-deazaguanine (PreQ1) at position 34 (anticodon wobble position) in tRNAs with GU(N) anticodons (tRNA-Asp, -Asn, -His and -Tyr). Catalysis occurs through a double-displacement mechanism. The nucleophile active site attacks the C1' of nucleotide 34 to detach the guanine base from the RNA, forming a covalent enzyme-RNA intermediate. The proton acceptor active site deprotonates the incoming PreQ1, allowing a nucleophilic attack on the C1' of the ribose to form the product. After dissociation, two additional enzymatic reactions on the tRNA convert PreQ1 to queuine (Q), resulting in the hypermodified nucleoside queuosine (7-(((4,5-cis-dihydroxy-2-cyclopenten-1-yl)amino)methyl)-7-deazaguanosine). The polypeptide is Queuine tRNA-ribosyltransferase (Streptococcus thermophilus (strain ATCC BAA-250 / LMG 18311)).